Consider the following 130-residue polypeptide: Small ribosomal subunit protein uS9 (130 aa).

Belongs to the universal ribosomal protein uS9 family.

The chain is Small ribosomal subunit protein uS9 from Shigella sonnei (strain Ss046).